Consider the following 184-residue polypeptide: Ras-related protein Rap-1b (184 aa).

10-17 (GSGGVGKS) lines the GTP pocket. An Effector region motif is present at residues 32-40 (YDPTIEDSY). GTP-binding positions include 57 to 61 (DTAGT) and 116 to 119 (NKCD). At Cys181 the chain carries Cysteine methyl ester. The S-geranylgeranyl cysteine moiety is linked to residue Cys181. Residues 182–184 (HLL) constitute a propeptide, removed in mature form.

It belongs to the small GTPase superfamily. Ras family.

The protein resides in the cell membrane. It is found in the cytoplasm. The protein localises to the cytosol. Its subcellular location is the cell junction. It catalyses the reaction GTP + H2O = GDP + phosphate + H(+). In terms of biological role, probable GTP-binding protein that possesses GTPase activity. May play a role in endothelial cell polarity and endothelial barrier function. The chain is Ras-related protein Rap-1b (rap1b) from Xenopus laevis (African clawed frog).